The following is a 493-amino-acid chain: UDP-N-acetylmuramoyl-L-alanyl-D-glutamate--2,6-diaminopimelate ligase (493 aa).

Positions 30 and 32 each coordinate UDP-N-acetyl-alpha-D-muramoyl-L-alanyl-D-glutamate. 117 to 123 serves as a coordination point for ATP; that stretch reads GTNGKTT. UDP-N-acetyl-alpha-D-muramoyl-L-alanyl-D-glutamate contacts are provided by residues N158, 159 to 160, S186, Q192, and R194; that span reads TT. The residue at position 226 (K226) is an N6-carboxylysine. Meso-2,6-diaminopimelate contacts are provided by residues R388, 412-415, G463, and E467; that span reads DNPR. A Meso-diaminopimelate recognition motif motif is present at residues 412-415; sequence DNPR.

Belongs to the MurCDEF family. MurE subfamily. Requires Mg(2+) as cofactor. Carboxylation is probably crucial for Mg(2+) binding and, consequently, for the gamma-phosphate positioning of ATP.

Its subcellular location is the cytoplasm. The enzyme catalyses UDP-N-acetyl-alpha-D-muramoyl-L-alanyl-D-glutamate + meso-2,6-diaminopimelate + ATP = UDP-N-acetyl-alpha-D-muramoyl-L-alanyl-gamma-D-glutamyl-meso-2,6-diaminopimelate + ADP + phosphate + H(+). The protein operates within cell wall biogenesis; peptidoglycan biosynthesis. Its function is as follows. Catalyzes the addition of meso-diaminopimelic acid to the nucleotide precursor UDP-N-acetylmuramoyl-L-alanyl-D-glutamate (UMAG) in the biosynthesis of bacterial cell-wall peptidoglycan. This is UDP-N-acetylmuramoyl-L-alanyl-D-glutamate--2,6-diaminopimelate ligase from Vibrio vulnificus (strain YJ016).